Reading from the N-terminus, the 395-residue chain is GPI-anchor transamidase (395 aa).

Positions 1-27 (MAVTDSLSRAASTLAAVLLLSFGSVAA) are cleaved as a signal peptide. Over 28–368 (SHIEDQAEQF…PKLKDWHPPG (341 aa)) the chain is Lumenal. Ca(2+)-binding residues include aspartate 79, isoleucine 82, glutamate 118, and aspartate 120. Histidine 164 acts as the Proton donor in catalysis. Cysteine 206 acts as the Nucleophile; acyl-thioester intermediate in catalysis. A protein contacts are provided by cysteine 206, serine 232, and serine 234. An autoinhibitory loop region spans residues 231-236 (DSLSHQ). Cysteine 275 and cysteine 280 are oxidised to a cystine. Residues 369–385 (GFILGLWALIIMVFFKT) form a helical membrane-spanning segment. The Cytoplasmic segment spans residues 386 to 395 (YGIKHMKFIF).

Belongs to the peptidase C13 family. Heteropentamer. Part of the GPI-anchor transamidase complex, consisting of PIGK, PIGT, PIGS, PIGU and GAA1. Interacts with GPAA1. Interacts with PIGT; this interaction, via a disulfide link, stabilizes the expression of GAA1 and PIGK and links them to PIGS. In terms of processing, the disulfide bond between PIGK/GPI8 and PIGT is important for normal enzyme activity.

It is found in the endoplasmic reticulum membrane. It participates in glycolipid biosynthesis; glycosylphosphatidylinositol-anchor biosynthesis. In the absence of proproteins substrates, exists in an inactive state with a disrupted catalytic site by an autoinhibitory loop. The binding of proprotein substrates, particularly the CSP region, to GPI-T triggers concerted conformational changes that alleviate the inhibition by the autoinhibitory loop. Meanwhile, proprotein residues near the omega- site induce the formation of a catalytic cleft for catalysis, following which the products are released and GPI-T reverts to the inactive state. Its function is as follows. Catalytic subunit of the glycosylphosphatidylinositol-anchor (GPI-anchor) transamidase (GPI-T) complex that catalyzes the formation of the linkage between a proprotein and a GPI-anchor and participates in GPI anchored protein biosynthesis. Recognizes diverse proproteins at a C-terminal signal peptide (CSP) region that lacks consensus sequence and replaces it with a GPI-anchor via a transamidation reaction. Transamidation catalysis reaction follows a two-phase mechanism. In the acyl-enzyme phase, the carbonyl group of the proproteins's omega-site undergoes a nucleophilic attack forming an enzyme-substrate thioester bond. Followed by a general acid catalysis that allows CSP releasing, regenerating the carbonyl, and forming the acyl-enzyme intermediate. In the GPI-anchor attachment phase, the amino group of the GPI-anchor's ethanolamine phosphate, the one on third mannose (EtNP3), mediates a nucleophilic attack on the carbonyl of the acyl-enzyme intermediate, replacing the CSP, allowing GPI-anchor attachment to the omega-residue, therefore forming the product and freeing the enzyme. The sequence is that of GPI-anchor transamidase from Pongo abelii (Sumatran orangutan).